An 84-amino-acid chain; its full sequence is Chymotrypsin inhibitor Ani s 6 (84 aa).

The first 22 residues, 1 to 22 (MFQSTFFLVLMVCVATARFANK), serve as a signal peptide directing secretion. 5 disulfides stabilise this stretch: cysteine 25–cysteine 58, cysteine 34–cysteine 54, cysteine 38–cysteine 50, cysteine 42–cysteine 79, and cysteine 60–cysteine 73. One can recognise a TIL domain in the interval 25–79 (CPPNEEYNECGNPCQEKCDNGEPVICTYQCEHRCFCKQGYVRLTEDGECVPEEFC).

It belongs to the serine protease inhibitor-like (TIL domain-containing) family.

Its subcellular location is the secreted. Its function is as follows. Inhibits alpha-chymotrypsin, but not trypsin. The chain is Chymotrypsin inhibitor Ani s 6 from Anisakis simplex (Herring worm).